The primary structure comprises 589 residues: Aspartate--tRNA ligase (589 aa).

An L-aspartate-binding site is contributed by glutamate 172. The aspartate stretch occupies residues 196-199 (QLFK). An L-aspartate-binding site is contributed by arginine 218. Residues 218 to 220 (RDE) and glutamine 227 each bind ATP. Histidine 449 is a binding site for L-aspartate. Residue glutamate 483 coordinates ATP. L-aspartate is bound at residue arginine 490. 535–538 (GLDR) serves as a coordination point for ATP.

Belongs to the class-II aminoacyl-tRNA synthetase family. Type 1 subfamily. As to quaternary structure, homodimer.

It localises to the cytoplasm. The enzyme catalyses tRNA(Asp) + L-aspartate + ATP = L-aspartyl-tRNA(Asp) + AMP + diphosphate. In terms of biological role, catalyzes the attachment of L-aspartate to tRNA(Asp) in a two-step reaction: L-aspartate is first activated by ATP to form Asp-AMP and then transferred to the acceptor end of tRNA(Asp). In Haemophilus ducreyi (strain 35000HP / ATCC 700724), this protein is Aspartate--tRNA ligase.